We begin with the raw amino-acid sequence, 1009 residues long: Rho GTPase-activating protein gacT (1009 aa).

Disordered stretches follow at residues Met-1–His-72 and Thr-89–Gln-117. Over residues Phe-12–Asp-23 the composition is skewed to basic and acidic residues. Residues Gly-26–Gly-35 show a composition bias toward low complexity. Over residues Glu-58–Ser-69 the composition is skewed to polar residues. Over residues Thr-89–Asn-103 the composition is skewed to basic residues. The span at His-104–Gln-117 shows a compositional bias: low complexity. The Rho-GAP domain maps to Val-163 to Tyr-351. Disordered stretches follow at residues Thr-388 to Ala-420, Pro-432 to Val-482, and Gly-508 to Gln-571. Composition is skewed to low complexity over residues Pro-394–Pro-415, Pro-432–Ser-468, and Thr-512–Ser-521. The span at Leu-522–Gly-546 shows a compositional bias: gly residues. Residues Ser-547 to Val-557 show a composition bias toward low complexity. Positions Ala-580–Leu-656 form a coiled coil. The segment at Ile-686–Arg-713 is disordered. The span at Ser-695–Arg-713 shows a compositional bias: low complexity. Residues Ser-715–Gln-743 adopt a coiled-coil conformation. Residues Thr-759–Asp-781 are disordered. Polar residues predominate over residues Ser-766 to Asp-781. The stretch at Glu-839 to Tyr-952 forms a coiled coil. The segment at Ser-965–Lys-1009 is disordered. The segment covering Thr-967–Pro-980 has biased composition (polar residues). The span at Ser-981 to Lys-1009 shows a compositional bias: low complexity.

Its subcellular location is the cytoplasm. Rho GTPase-activating protein involved in the signal transduction pathway. In Dictyostelium discoideum (Social amoeba), this protein is Rho GTPase-activating protein gacT (gacT).